The primary structure comprises 123 residues: Methicillin resistance regulatory protein MecI (123 aa).

The segment at residues Glu-7–Ser-71 is a DNA-binding region (H-T-H motif). The important for dimerization stretch occupies residues Glu-74–Lys-123.

Belongs to the BlaI transcriptional regulatory family. As to quaternary structure, monomer and homodimer. In terms of processing, upon exposure to beta-lactams, proteolytic cleavage at a single site impairs dimerization and abolishes repressor activity.

Its subcellular location is the cytoplasm. In terms of biological role, transcriptional repressor that constitutively blocks the transcription of the gene for the penicillin-binding protein MecA. Binds palindromic DNA with the sequence 5'-TACA-[AT]-N-TGTA-3'. Regulates genes involved in antibiotic resistance. Binds DNA as a dimer. The protein is Methicillin resistance regulatory protein MecI (mecI) of Staphylococcus aureus (strain N315).